Reading from the N-terminus, the 234-residue chain is HTH-type transcriptional regulator SmoD (234 aa).

Positions 8–76 (LPMYMQIAEM…QGSGNYIRAV (69 aa)) constitute an HTH gntR-type domain. A DNA-binding region (H-T-H motif) is located at residues 36–55 (ERDMAADLGIAVGTLRKSLA).

The protein resides in the cytoplasm. Its function is as follows. Probably regulates expression of genes involved in the sulfoquinovose monooxygenase (sulfo-SMO) pathway (smoABCDEFGHI). The sequence is that of HTH-type transcriptional regulator SmoD from Agrobacterium fabrum (strain C58 / ATCC 33970) (Agrobacterium tumefaciens (strain C58)).